Reading from the N-terminus, the 155-residue chain is Small ribosomal subunit protein uS7 (155 aa).

Belongs to the universal ribosomal protein uS7 family. Part of the 30S ribosomal subunit. Contacts proteins S9 and S11.

In terms of biological role, one of the primary rRNA binding proteins, it binds directly to 16S rRNA where it nucleates assembly of the head domain of the 30S subunit. Is located at the subunit interface close to the decoding center, probably blocks exit of the E-site tRNA. The protein is Small ribosomal subunit protein uS7 of Corynebacterium aurimucosum (strain ATCC 700975 / DSM 44827 / CIP 107346 / CN-1) (Corynebacterium nigricans).